Consider the following 281-residue polypeptide: 3-deoxy-manno-octulosonate cytidylyltransferase (281 aa).

Belongs to the KdsB family.

It is found in the cytoplasm. It catalyses the reaction 3-deoxy-alpha-D-manno-oct-2-ulosonate + CTP = CMP-3-deoxy-beta-D-manno-octulosonate + diphosphate. The protein operates within nucleotide-sugar biosynthesis; CMP-3-deoxy-D-manno-octulosonate biosynthesis; CMP-3-deoxy-D-manno-octulosonate from 3-deoxy-D-manno-octulosonate and CTP: step 1/1. It functions in the pathway bacterial outer membrane biogenesis; lipopolysaccharide biosynthesis. Functionally, activates KDO (a required 8-carbon sugar) for incorporation into bacterial lipopolysaccharide in Gram-negative bacteria. In Xanthomonas campestris pv. campestris (strain B100), this protein is 3-deoxy-manno-octulosonate cytidylyltransferase.